A 187-amino-acid chain; its full sequence is Superoxide dismutase [Cu-Zn] (187 aa).

Residues 1 to 23 (MMKMKTLLALAISGICAAGVANA) form the signal peptide. Cu cation-binding residues include H80, H82, and H105. C87 and C183 are oxidised to a cystine. Residues H105, H114, H123, and D126 each coordinate Zn(2+). H161 contacts Cu cation.

Belongs to the Cu-Zn superoxide dismutase family. In terms of assembly, homodimer. The cofactor is Cu cation. Zn(2+) serves as cofactor.

Its subcellular location is the periplasm. The catalysed reaction is 2 superoxide + 2 H(+) = H2O2 + O2. Functionally, destroys radicals which are normally produced within the cells and which are toxic to biological systems. Its function is as follows. May confer survival advantage by accelerating dismutation of superoxide of environmental origin to hydrogen peroxide, disruptive to the normal mucociliary clearance process in the host. In Haemophilus parainfluenzae, this protein is Superoxide dismutase [Cu-Zn] (sodC).